We begin with the raw amino-acid sequence, 421 residues long: EGFR adapter protein (421 aa).

4 disordered regions span residues 18-94 (TFIS…PQLQ), 109-154 (DVQE…RLVD), 173-194 (EDSR…SGCG), and 372-396 (PVPL…AGGT). The span at 21-30 (SSSSASSSSS) shows a compositional bias: low complexity. A compositionally biased stretch (basic residues) spans 62–89 (FFHHHHPPAHPHPPRQQPHPHSHSHPHP). Over residues 109–120 (DVQELSGQEHPH) the composition is skewed to basic and acidic residues. The segment covering 181-194 (STCGSSLTSGSGCG) has biased composition (low complexity). Residues 286–379 (WFQAGIPREI…LLPVPLTLPR (94 aa)) form the SH2 domain.

As to quaternary structure, may interact (via SH2 domain) with Egfr (when phosphorylated). Detected along the wing margin, with high levels of expression in two stripes of cells on either side of the dorsal/ventral boundary and lower levels of expression in a small region at the anteroposterior boundary (at protein level). High levels of expression along two parallel stripes of cells on either side of the wing pouch dorsal/ventral boundary, and slightly lower levels of expression in a region either side of the anteroposterior boundary. Also expressed in discrete regions of the wing imaginal disk outside of the pouch. Expressed in eye imaginal disk photoreceptors with highest levels of expression in R7 photoreceptor cells.

In terms of biological role, involved in the negative regulation of the Egfr/Ras signaling pathway. During wing morphogenesis, may function redundantly with PVRAP to inhibit Egfr activity and prevent uncontrolled cell growth. The protein is EGFR adapter protein of Drosophila melanogaster (Fruit fly).